We begin with the raw amino-acid sequence, 160 residues long: Class II hydrophobin 8 (160 aa).

4 disulfide bridges follow: Cys-92/Cys-141, Cys-102/Cys-132, Cys-103/Cys-115, and Cys-142/Cys-153.

The protein belongs to the cerato-ulmin hydrophobin family. Homodimer. Homodimers further self-assemble to form highly ordered films at water-air interfaces through intermolecular interactions.

The protein localises to the secreted. It localises to the cell wall. Functionally, aerial growth, conidiation, and dispersal of filamentous fungi in the environment rely upon a capability of their secreting small amphipathic proteins called hydrophobins (HPBs) with low sequence identity. Class I can self-assemble into an outermost layer of rodlet bundles on aerial cell surfaces, conferring cellular hydrophobicity that supports fungal growth, development and dispersal; whereas Class II form highly ordered films at water-air interfaces through intermolecular interactions but contribute nothing to the rodlet structure. This Trichoderma asperellum (strain ATCC 204424 / CBS 433.97 / NBRC 101777) protein is Class II hydrophobin 8.